Reading from the N-terminus, the 206-residue chain is Small ribosomal subunit protein uS4c (206 aa).

Basic residues-rich tracts occupy residues 1–13 and 25–34; these read MSRYRGPKLRITR and QSKKKGRPGQ. Positions 1-50 are disordered; sequence MSRYRGPKLRITRRLGALPGLTQKQSKKKGRPGQHGKSNEADNSKKTTEY. Residues 37–50 are compositionally biased toward basic and acidic residues; the sequence is KSNEADNSKKTTEY. Positions 95–157 constitute an S4 RNA-binding domain; that stretch reads MRLDTICFTL…ATSKNLVEGN (63 aa).

It belongs to the universal ribosomal protein uS4 family. As to quaternary structure, part of the 30S ribosomal subunit. Contacts protein S5. The interaction surface between S4 and S5 is involved in control of translational fidelity.

Its subcellular location is the plastid. The protein resides in the chloroplast. Functionally, one of the primary rRNA binding proteins, it binds directly to 16S rRNA where it nucleates assembly of the body of the 30S subunit. Its function is as follows. With S5 and S12 plays an important role in translational accuracy. The polypeptide is Small ribosomal subunit protein uS4c (rps4) (Trieres chinensis (Marine centric diatom)).